We begin with the raw amino-acid sequence, 353 residues long: tRNA-specific 2-thiouridylase MnmA 2 (353 aa).

Residues 9–16 (AMSGGVDS) and M35 contribute to the ATP site. The active-site Nucleophile is C98. Residues C98 and C194 are joined by a disulfide bond. G122 lines the ATP pocket. The tract at residues 144–146 (KDQ) is interaction with tRNA. C194 functions as the Cysteine persulfide intermediate in the catalytic mechanism. Residues 300 to 301 (RY) form an interaction with tRNA region.

Belongs to the MnmA/TRMU family.

It localises to the cytoplasm. The enzyme catalyses S-sulfanyl-L-cysteinyl-[protein] + uridine(34) in tRNA + AH2 + ATP = 2-thiouridine(34) in tRNA + L-cysteinyl-[protein] + A + AMP + diphosphate + H(+). Its function is as follows. Catalyzes the 2-thiolation of uridine at the wobble position (U34) of tRNA, leading to the formation of s(2)U34. This Clostridium botulinum (strain Langeland / NCTC 10281 / Type F) protein is tRNA-specific 2-thiouridylase MnmA 2.